Here is a 278-residue protein sequence, read N- to C-terminus: 3-methyl-2-oxobutanoate hydroxymethyltransferase 1 (278 aa).

Positions 49 and 88 each coordinate Mg(2+). 3-methyl-2-oxobutanoate contacts are provided by residues 49–50 (DS), aspartate 88, and lysine 118. Glutamate 120 contributes to the Mg(2+) binding site. Residue glutamate 187 is the Proton acceptor of the active site.

It belongs to the PanB family. Homodecamer; pentamer of dimers. It depends on Mg(2+) as a cofactor.

It localises to the cytoplasm. It catalyses the reaction 3-methyl-2-oxobutanoate + (6R)-5,10-methylene-5,6,7,8-tetrahydrofolate + H2O = 2-dehydropantoate + (6S)-5,6,7,8-tetrahydrofolate. The protein operates within cofactor biosynthesis; (R)-pantothenate biosynthesis; (R)-pantoate from 3-methyl-2-oxobutanoate: step 1/2. Its function is as follows. Catalyzes the reversible reaction in which hydroxymethyl group from 5,10-methylenetetrahydrofolate is transferred onto alpha-ketoisovalerate to form ketopantoate. The polypeptide is 3-methyl-2-oxobutanoate hydroxymethyltransferase 1 (Hahella chejuensis (strain KCTC 2396)).